The chain runs to 1018 residues: Putative type I restriction enzyme MjaVIIIP endonuclease subunit (1018 aa).

It belongs to the HsdR family. As to quaternary structure, the type I restriction/modification system is composed of three polypeptides R, M and S.

It carries out the reaction Endonucleolytic cleavage of DNA to give random double-stranded fragments with terminal 5'-phosphates, ATP is simultaneously hydrolyzed.. In terms of biological role, the restriction (R) subunit of a type I restriction enzyme that recognizes 5'-GAYN(5)GTAA-3' and cleaves a random distance away. The R subunit is required for both endonuclease and ATPase activities but not for modification. After locating a non-methylated recognition site, the enzyme complex serves as a molecular motor that translocates DNA in an ATP-dependent manner until a collision occurs that triggers cleavage. The sequence is that of Putative type I restriction enzyme MjaVIIIP endonuclease subunit from Methanocaldococcus jannaschii (strain ATCC 43067 / DSM 2661 / JAL-1 / JCM 10045 / NBRC 100440) (Methanococcus jannaschii).